Here is a 1403-residue protein sequence, read N- to C-terminus: DNA-directed RNA polymerase subunit beta' (1403 aa).

Cysteine 71, cysteine 73, cysteine 86, and cysteine 89 together coordinate Zn(2+). Positions 462, 464, and 466 each coordinate Mg(2+). Zn(2+)-binding residues include cysteine 811, cysteine 885, cysteine 892, and cysteine 895.

This sequence belongs to the RNA polymerase beta' chain family. The RNAP catalytic core consists of 2 alpha, 1 beta, 1 beta' and 1 omega subunit. When a sigma factor is associated with the core the holoenzyme is formed, which can initiate transcription. It depends on Mg(2+) as a cofactor. Zn(2+) is required as a cofactor.

The catalysed reaction is RNA(n) + a ribonucleoside 5'-triphosphate = RNA(n+1) + diphosphate. Functionally, DNA-dependent RNA polymerase catalyzes the transcription of DNA into RNA using the four ribonucleoside triphosphates as substrates. This Bartonella tribocorum (strain CIP 105476 / IBS 506) protein is DNA-directed RNA polymerase subunit beta'.